Reading from the N-terminus, the 1302-residue chain is RNA-directed RNA polymerase (1302 aa).

The RdRp catalytic domain maps to 562–823 (VIVGDLEATG…QTHAKQGCYV (262 aa)).

The protein belongs to the reoviridae RNA-directed RNA polymerase family.

The enzyme catalyses RNA(n) + a ribonucleoside 5'-triphosphate = RNA(n+1) + diphosphate. This chain is RNA-directed RNA polymerase (Segment-1), found in Antilocapra americana (Pronghorn).